Here is a 201-residue protein sequence, read N- to C-terminus: Recombination protein RecR (201 aa).

The C4-type zinc-finger motif lies at 60-75 (CSVCGNVDTTDPCSIC). Residues 83–178 (TTIIVVEDVA…KITRLAHGVP (96 aa)) form the Toprim domain.

It belongs to the RecR family.

Functionally, may play a role in DNA repair. It seems to be involved in an RecBC-independent recombinational process of DNA repair. It may act with RecF and RecO. The protein is Recombination protein RecR of Bartonella quintana (strain Toulouse) (Rochalimaea quintana).